The sequence spans 371 residues: Cytochrome b (371 aa).

A run of 4 helical transmembrane segments spans residues 25 to 45, 69 to 90, 105 to 125, and 170 to 190; these read FGSM…FLAV, WMMQ…YIHI, WMSG…GYVL, and FFAL…LHII. His-75 and His-89 together coordinate heme b. Heme b is bound by residues His-174 and His-188. Residue His-193 participates in a ubiquinone binding. 4 helical membrane-spanning segments follow: residues 218–238, 280–300, 312–332, and 339–358; these read HKDL…MSFF, LGGA…PFTH, LSQL…WAAT, and FIII…LSFP.

The protein belongs to the cytochrome b family. The cytochrome bc1 complex contains 3 respiratory subunits (MT-CYB, CYC1 and UQCRFS1), 2 core proteins (UQCRC1 and UQCRC2) and probably 6 low-molecular weight proteins. Requires heme b as cofactor.

It localises to the mitochondrion inner membrane. Functionally, component of the ubiquinol-cytochrome c reductase complex (complex III or cytochrome b-c1 complex) that is part of the mitochondrial respiratory chain. The b-c1 complex mediates electron transfer from ubiquinol to cytochrome c. Contributes to the generation of a proton gradient across the mitochondrial membrane that is then used for ATP synthesis. The protein is Cytochrome b (MT-CYB) of Apodora papuana (Papuan olive python).